A 125-amino-acid chain; its full sequence is Large ribosomal subunit protein bL12 (125 aa).

Belongs to the bacterial ribosomal protein bL12 family. In terms of assembly, homodimer. Part of the ribosomal stalk of the 50S ribosomal subunit. Forms a multimeric L10(L12)X complex, where L10 forms an elongated spine to which 2 to 4 L12 dimers bind in a sequential fashion. Binds GTP-bound translation factors.

Its function is as follows. Forms part of the ribosomal stalk which helps the ribosome interact with GTP-bound translation factors. Is thus essential for accurate translation. The protein is Large ribosomal subunit protein bL12 of Anaeromyxobacter dehalogenans (strain 2CP-1 / ATCC BAA-258).